A 1780-amino-acid chain; its full sequence is Callose synthase 12 (1780 aa).

At 1–302 (MSLRHRTVPP…ERRTFFYLYR (302 aa)) the chain is on the cytoplasmic side. Residues 303–323 (SFDRLWVMLALFLQAAIIVAW) form a helical membrane-spanning segment. The Extracellular segment spans residues 324–348 (EEKPDTSSVTRQLWNALKARDVQVR). The helical transmembrane segment at 349–369 (LLTVFLTWSGMRLLQAVLDAA) threads the bilayer. The Cytoplasmic segment spans residues 370–386 (SQYPLVSRETKRHFFRM). The helical transmembrane segment at 387–407 (LMKVIAAAVWIVAFTVLYTNI) threads the bilayer. The Extracellular portion of the chain corresponds to 408 to 427 (WKQKRQDRQWSNAATTKIYQ). Residues 428–448 (FLYAVGAFLVPEILALALFII) traverse the membrane as a helical segment. At 449–489 (PWMRNFLEETNWKIFFALTWWFQGKSFVGRGLREGLVDNIK) the chain is on the cytoplasmic side. The chain crosses the membrane as a helical span at residues 490–510 (YSTFWIFVLATKFTFSYFLQV). Residues 511–542 (KPMIKPSKLLWNLKDVDYEWHQFYGDSNRFSV) are Extracellular-facing. The chain crosses the membrane as a helical span at residues 543 to 563 (ALLWLPVVLIYLMDIQIWYAI). At 564–1348 (YSSIVGAVVG…FFRMLSFFYT (785 aa)) the chain is on the cytoplasmic side. The helical transmembrane segment at 1349–1369 (TVGFFFNTMMVILTVYAFLWG) threads the bilayer. The Extracellular segment spans residues 1370 to 1394 (RVYLALSGVEKSALADSTDTNAALG). A helical transmembrane segment spans residues 1395–1415 (VILNQQFIIQLGLFTALPMIV). Residues 1416-1421 (EWSLEE) are Cytoplasmic-facing. A helical membrane pass occupies residues 1422–1442 (GFLLAIWNFIRMQIQLSAVFY). Residues 1443-1489 (TFSMGTRAHYFGRTILHGGAKYRATGRGFVVEHKGFTENYRLYARSH) lie on the Extracellular side of the membrane. Residues 1490–1510 (FVKAIELGLILIVYASHSPIA) form a helical membrane-spanning segment. The Cytoplasmic segment spans residues 1511-1516 (KDSLIY). The chain crosses the membrane as a helical span at residues 1517-1537 (IAMTITSWFLVISWIMAPFVF). The Extracellular segment spans residues 1538 to 1588 (NPSGFDWLKTVYDFEDFMNWIWYQGRISTKSEQSWEKWWYEEQDHLRNTGK). The chain crosses the membrane as a helical span at residues 1589-1609 (AGLFVEIILVLRFFFFQYGIV). Over 1610 to 1620 (YQLKIANGSTS) the chain is Cytoplasmic. The chain crosses the membrane as a helical span at residues 1621–1641 (LFVYLFSWIYIFAIFVLFLVI). The Extracellular segment spans residues 1642 to 1657 (QYARDKYSAKAHIRYR). Residues 1658–1678 (LVQFLLIVLAILVIVALLEFT) traverse the membrane as a helical segment. Over 1679 to 1681 (HFS) the chain is Cytoplasmic. The helical transmembrane segment at 1682 to 1702 (FIDIFTSLLAFIPTGWGILLI) threads the bilayer. At 1703 to 1728 (AQTQRKWLKNYTIFWNAVVSVARMYD) the chain is on the extracellular side. Residue Asn-1712 is glycosylated (N-linked (GlcNAc...) asparagine). The chain crosses the membrane as a helical span at residues 1729 to 1749 (ILFGILIMVPVAFLSWMPGFQ). At 1750 to 1780 (SMQTRILFNEAFSRGLRIMQIVTGKKSKGDV) the chain is on the cytoplasmic side.

It belongs to the glycosyltransferase 48 family. In terms of tissue distribution, highly expressed in flowers. Expressed at low levels in roots, leaves, stems, cauline leaves and siliques.

The protein resides in the cell membrane. It catalyses the reaction [(1-&gt;3)-beta-D-glucosyl](n) + UDP-alpha-D-glucose = [(1-&gt;3)-beta-D-glucosyl](n+1) + UDP + H(+). Involved in sporophytic and gametophytic development. Required for normal leaf development. During pollen formation, required for the formation of the callose wall separating the tetraspores of the tetrad (interstitial wall), but not for the callose wall surrounding the pollen mother cells (peripheral wall). Functionally redudant to CALS11 (GSL1). May play a role later in pollen grain maturation. Required for callose formation induced by wounding and pathogen attack. May interfere with salicylic acid-induced signaling pathway during defense response. During plant growth and development, callose is found as a transitory component of the cell plate in dividing cells, is a major component of pollen mother cell walls and pollen tubes, and is found as a structural component of plasmodesmatal canals. In Arabidopsis thaliana (Mouse-ear cress), this protein is Callose synthase 12 (CALS12).